A 425-amino-acid chain; its full sequence is Putative TRAP transporter large permease protein HI_1029 (425 aa).

13 consecutive transmembrane segments (helical) span residues V3 to A23, L24 to A44, F54 to L74, L93 to A113, L139 to F159, K169 to W189, V217 to P237, G241 to L261, T275 to A295, P312 to L332, P334 to P354, V355 to G375, and Y399 to M419.

Belongs to the TRAP transporter large permease family.

It localises to the cell inner membrane. The chain is Putative TRAP transporter large permease protein HI_1029 from Haemophilus influenzae (strain ATCC 51907 / DSM 11121 / KW20 / Rd).